The following is a 95-amino-acid chain: uncharacterized protein (95 aa).

The presence of the two linear plasmids, termed pGKL1 and pGKL2, in strains of Kluyveromyces lactis confers the killer phenotype to the host cell, by promoting the secretion of a toxin able to inhibit the growth of sensitive strains. This is an uncharacterized protein from Kluyveromyces lactis (strain ATCC 8585 / CBS 2359 / DSM 70799 / NBRC 1267 / NRRL Y-1140 / WM37) (Yeast).